The chain runs to 119 residues: Large ribosomal subunit protein eL31y (119 aa).

It belongs to the eukaryotic ribosomal protein eL31 family.

The polypeptide is Large ribosomal subunit protein eL31y (RPL31B) (Arabidopsis thaliana (Mouse-ear cress)).